Reading from the N-terminus, the 290-residue chain is Tegument protein VP22 (290 aa).

Residues 98-112 (STSHGRLSPTKTTPH) show a composition bias toward polar residues. The segment at 98 to 156 (STSHGRLSPTKTTPHPKSAGVTPPQRVPARPATRAAAPSATPTQPDCVAKQRTSPGVNS) is disordered. A compositionally biased stretch (low complexity) spans 118-142 (VTPPQRVPARPATRAAAPSATPTQP). Residues 146–149 (AKQR) carry the Nuclear localization signal motif. Residues 219–231 (LDRFLKAAAIRIL) carry the Nuclear export signal motif.

It belongs to the alphaherpesvirinae VP22 tegument protein family. Interacts with gE (via C-terminus); this interaction is necessary for the recruitment of VP22 to the Golgi and its packaging into virions. Interacts with gM (via C-terminus). Interacts with VP16; this interaction allows the formation of a tripartite complex composed of VP16, VP22 and UL41/VHS. Interacts with the capsid-binding protein UL16. Interacts with host CGAS. Highly phosphorylated in the host cell. Packaging is selective for underphosphorylated forms.

The protein localises to the virion tegument. It localises to the host cytoplasm. Its subcellular location is the host nucleus. The protein resides in the host Golgi apparatus. In terms of biological role, tegument protein that plays different roles during the time course of infection. Participates in both the accumulation of viral mRNAs and viral protein translation at late time of infection. Modulates the RNase activity of the virion host shutoff protein UL41 probably to ensure necessary levels of key cellular mRNAs and proteins. Plays a role in microtubule reorganization that occurs after viral infection by stabilizing microtubule network. Plays a role in the inhibition of host innate immune system by targeting the CGAS enzymatic activity which is the principal cytosolic DNA sensor that detects invading viral DNA. Acts by mediating disruption of liquid-like droplets in which CGAS is activated, thereby preventing CGAS activity. The sequence is that of Tegument protein VP22 (11) from Equus caballus (Horse).